A 137-amino-acid chain; its full sequence is Large ribosomal subunit protein uL16 (137 aa).

A disordered region spans residues 1 to 22; the sequence is MLQPKRTKFRKQQKGRNRGLAH.

This sequence belongs to the universal ribosomal protein uL16 family. In terms of assembly, part of the 50S ribosomal subunit.

In terms of biological role, binds 23S rRNA and is also seen to make contacts with the A and possibly P site tRNAs. This chain is Large ribosomal subunit protein uL16, found in Saccharophagus degradans (strain 2-40 / ATCC 43961 / DSM 17024).